We begin with the raw amino-acid sequence, 301 residues long: Probable alpha-L-glutamate ligase (301 aa).

In terms of domain architecture, ATP-grasp spans Leu-104 to Glu-287. Residues Lys-141, Glu-178–Tyr-179, Asp-187, and Arg-211–Asn-213 contribute to the ATP site. Residues Asp-248, Glu-260, and Asn-262 each coordinate Mg(2+). Mn(2+) contacts are provided by Asp-248, Glu-260, and Asn-262.

The protein belongs to the RimK family. Requires Mg(2+) as cofactor. Mn(2+) serves as cofactor.

The sequence is that of Probable alpha-L-glutamate ligase from Pseudomonas fluorescens (strain Pf0-1).